The primary structure comprises 414 residues: Putative transporter YoaB (414 aa).

The Cytoplasmic segment spans residues 1 to 11; the sequence is MLDKIGIPKRL. The chain crosses the membrane as a helical span at residues 12-32; that stretch reads AWGFLGVVLFMMGDGLEQGWL. Topologically, residues 33 to 47 are extracellular; the sequence is SPFLIENGLTVQQSA. The helical transmembrane segment at 48-68 threads the bilayer; that stretch reads SIFSIYGIALAIASWFSGVCL. Topologically, residues 69-75 are cytoplasmic; the sequence is EAFGAKR. Residues 76–96 form a helical membrane-spanning segment; that stretch reads TMFMGLLFYVIGTAAFIVFGF. The Extracellular segment spans residues 97–107; it reads EQLNLPVMYVT. A helical transmembrane segment spans residues 108 to 128; the sequence is YFVKGLGYPLFAYSFLTWVIY. Over 129 to 136 the chain is Cytoplasmic; the sequence is RTPQSKLS. The helical transmembrane segment at 137–157 threads the bilayer; the sequence is TAVGWFWIAYCLGMFVFGAWY. Residues 158–167 lie on the Extracellular side of the membrane; sequence SSYAIKAFGY. The chain crosses the membrane as a helical span at residues 168 to 188; that stretch reads LNTLWSSIFWVCLGAFFALFI. Residues 189–219 lie on the Cytoplasmic side of the membrane; the sequence is NKDRFEKKKRKRSETAEELLKGVTILFTNPR. Residues 220-240 traverse the membrane as a helical segment; sequence VLTGGIIRIINSIGTYGFPVF. Topologically, residues 241–255 are extracellular; that stretch reads LPMHMAQHGISTNVW. The helical transmembrane segment at 256–276 threads the bilayer; that stretch reads LQIWGTIFLGNIVFNLIFGIV. Residues 277–286 are Cytoplasmic-facing; the sequence is GDKFGWKNTV. Residues 287–307 traverse the membrane as a helical segment; sequence IWFGGVGCGIFTVLLYYAPVF. Residues 308–316 are Extracellular-facing; the sequence is SGGSLAVVS. Residues 317-337 traverse the membrane as a helical segment; sequence VIGFIWGGLLAGYVPIGAIVP. Residues 338 to 343 lie on the Cytoplasmic side of the membrane; that stretch reads TVAGKD. The chain crosses the membrane as a helical span at residues 344-364; it reads KGAAMSVLNLAAGLSAFVGPA. Residues 365 to 375 lie on the Extracellular side of the membrane; the sequence is LAWLFIGLVGA. Residues 376 to 398 form a helical membrane-spanning segment; the sequence is QGVVWIFAALYLASAVLTKCIHI. The Cytoplasmic portion of the chain corresponds to 399 to 414; it reads PEEKAVKEETSPQYAS.

The protein belongs to the major facilitator superfamily. Sugar transporter (TC 2.A.1.1) family. CsbX subfamily.

The protein resides in the cell membrane. This Bacillus subtilis (strain 168) protein is Putative transporter YoaB (yoaB).